Here is a 250-residue protein sequence, read N- to C-terminus: Ribosomal RNA small subunit methyltransferase J (250 aa).

S-adenosyl-L-methionine contacts are provided by residues 96–97 (RD) and D168.

Belongs to the methyltransferase superfamily. RsmJ family.

It localises to the cytoplasm. The enzyme catalyses guanosine(1516) in 16S rRNA + S-adenosyl-L-methionine = N(2)-methylguanosine(1516) in 16S rRNA + S-adenosyl-L-homocysteine + H(+). Functionally, specifically methylates the guanosine in position 1516 of 16S rRNA. The sequence is that of Ribosomal RNA small subunit methyltransferase J from Neisseria meningitidis serogroup C / serotype 2a (strain ATCC 700532 / DSM 15464 / FAM18).